Reading from the N-terminus, the 209-residue chain is MQVFLDLDETLIHSIPVSRLGWTKSKPYPVKPFTVQDAGTPLSVMMGSSKAVNDGRKRLATRLSLFKRTVLTDHIMCWRPTLRTFLNGLFASGYKINVWTAASKPYALEVVKALNLKSYGMGLLVTAQDYPKGSVKRLKYLTGLDAVKIPLSNTAIVDDREEVKRAQPTRAVHIKPFTASSANTACSESDELKRVTASLAIIAGRSRRR.

One can recognise an FCP1 homology domain in the interval 1-199 (MQVFLDLDET…DELKRVTASL (199 aa)).

This is an uncharacterized protein from Dryophytes versicolor (chameleon treefrog).